A 153-amino-acid polypeptide reads, in one-letter code: UPF0756 membrane protein NT01CX_1209 (153 aa).

4 consecutive transmembrane segments (helical) span residues isoleucine 5–alanine 25, glutamate 45–isoleucine 65, isoleucine 83–leucine 103, and isoleucine 113–isoleucine 133.

It belongs to the UPF0756 family.

It localises to the cell membrane. The chain is UPF0756 membrane protein NT01CX_1209 from Clostridium novyi (strain NT).